Here is a 2694-residue protein sequence, read N- to C-terminus: Neurobeachin-like protein 1 (2694 aa).

Disordered regions lie at residues 1289–1314 (VLMKDNDKNMSTEDTKKNSDEKTDEE), 1330–1350 (SLEDRHSLDSNTPLFPEDSSV), and 1381–1411 (CEMSDSGSQVPDSLPSTPSPVESTKSFSVHS). Positions 1290–1314 (LMKDNDKNMSTEDTKKNSDEKTDEE) are enriched in basic and acidic residues. The segment covering 1383–1409 (MSDSGSQVPDSLPSTPSPVESTKSFSV) has biased composition (polar residues). Residues 1883-1980 (DQKEKLVLME…VRNKIYSRLL (98 aa)) form the BEACH-type PH domain. The BEACH domain maps to 1992–2284 (RSPQELFKAS…QLLKEPHPPR (293 aa)). WD repeat units lie at residues 2439–2478 (RHMDIVTCLATDYCGIHLISGSRDTTCMIWQITQQGGVPV) and 2490–2531 (GHTN…RTLR).

It belongs to the WD repeat neurobeachin family. In terms of tissue distribution, highly expressed in brain, kidney, prostate and testis. Weakly expressed in ovary, small intestine, colon and peripheral blood leukocytes. May be correlative to several tumors, such as ovary serous adenocarcinoma and metastasis mammary gland carcinoma breast.

The sequence is that of Neurobeachin-like protein 1 (NBEAL1) from Homo sapiens (Human).